We begin with the raw amino-acid sequence, 345 residues long: Phosphoribosylformylglycinamidine cyclo-ligase (345 aa).

This sequence belongs to the AIR synthase family.

It is found in the cytoplasm. The enzyme catalyses 2-formamido-N(1)-(5-O-phospho-beta-D-ribosyl)acetamidine + ATP = 5-amino-1-(5-phospho-beta-D-ribosyl)imidazole + ADP + phosphate + H(+). It functions in the pathway purine metabolism; IMP biosynthesis via de novo pathway; 5-amino-1-(5-phospho-D-ribosyl)imidazole from N(2)-formyl-N(1)-(5-phospho-D-ribosyl)glycinamide: step 2/2. The sequence is that of Phosphoribosylformylglycinamidine cyclo-ligase from Shewanella denitrificans (strain OS217 / ATCC BAA-1090 / DSM 15013).